Reading from the N-terminus, the 400-residue chain is 2-[(L-alanin-3-ylcarbamoyl)methyl]-2-hydroxybutanedioate decarboxylase (400 aa).

At Lys-50 the chain carries N6-(pyridoxal phosphate)lysine. Pyridoxal 5'-phosphate is bound by residues Gly-228 and 266 to 269 (ECGR). Cys-344 acts as the Proton donor in catalysis. Pyridoxal 5'-phosphate is bound at residue Tyr-373.

This sequence belongs to the Orn/Lys/Arg decarboxylase class-II family. In terms of assembly, homodimer. It depends on pyridoxal 5'-phosphate as a cofactor.

It carries out the reaction 2-[(L-alanin-3-ylcarbamoyl)methyl]-2-hydroxybutanedioate + H(+) = 2-[(2-aminoethylcarbamoyl)methyl]-2-hydroxybutanedioate + CO2. It functions in the pathway siderophore biosynthesis. Functionally, catalyzes the decarboxylation of citryl-L-2,3-diaminopropionic acid to citryl-diaminoethane, the second step in staphyloferrin B biosynthesis. This Staphylococcus aureus (strain NCTC 8325 / PS 47) protein is 2-[(L-alanin-3-ylcarbamoyl)methyl]-2-hydroxybutanedioate decarboxylase.